The following is a 135-amino-acid chain: Transcriptional activator protein (135 aa).

Positions 17–32 (KAQHKVAKKRAIRRSR) match the Nuclear localization signal motif. The segment at 37-54 (CGCSYYIHINCRNYGFSH) is a zinc-finger region. Residues 82–102 (AAPSNSSRVPDVCDPNTDNVQ) are disordered. The segment at 120–135 (ALPLFDGDFWDDIIDF) is transactivation.

It belongs to the geminiviridae transcriptional activator protein family. As to quaternary structure, monomer. Homodimer. Homooligomer. Self-interaction correlates with nuclear localization and efficient activation of transcription. Monomers suppress local silencing by interacting with and inactivating host adenosine kinase 2 (ADK2) in the cytoplasm. Interacts with and inhibits host SNF1 kinase. Binds to ssDNA. In terms of processing, phosphorylated.

It is found in the host nucleus. It localises to the host cytoplasm. Strong activator of the late viral genes promoters. Enhances the expression of the capsid protein and nuclear shuttle protein. Acts as a suppressor of RNA-mediated gene silencing, also known as post-transcriptional gene silencing (PTGS), a mechanism of plant viral defense that limits the accumulation of viral RNAs. Suppresses the host RNA silencing by inhibiting adenosine kinase 2 (ADK2), a kinase involved in a general methylation pathway. Also suppresses the host basal defense by interacting with and inhibiting SNF1 kinase, a key regulator of cell metabolism implicated in innate antiviral defense. Determines pathogenicity. This Mungbean yellow mosaic virus (strain Vigna) (MYMV) protein is Transcriptional activator protein.